Consider the following 387-residue polypeptide: Phosphoglycerate kinase (387 aa).

Substrate contacts are provided by residues 21–23, R36, 59–62, R113, and R146; these read DLN and HLGR. Residues K197, E314, and 340–343 contribute to the ATP site; that span reads GGDT.

This sequence belongs to the phosphoglycerate kinase family. Monomer.

It is found in the cytoplasm. The catalysed reaction is (2R)-3-phosphoglycerate + ATP = (2R)-3-phospho-glyceroyl phosphate + ADP. It functions in the pathway carbohydrate degradation; glycolysis; pyruvate from D-glyceraldehyde 3-phosphate: step 2/5. This chain is Phosphoglycerate kinase, found in Aeromonas salmonicida (strain A449).